A 224-amino-acid chain; its full sequence is Ribonuclease 3 (224 aa).

Residues 4 to 127 (YSKLEKCLDY…IMGAIYLESG (124 aa)) enclose the RNase III domain. A Mg(2+)-binding site is contributed by Glu-40. The active site involves Asp-44. Residues Asp-113 and Glu-116 each coordinate Mg(2+). Glu-116 is a catalytic residue. Residues 154–223 (DYKTALQEIT…AKIAIDKLKE (70 aa)) enclose the DRBM domain.

This sequence belongs to the ribonuclease III family. In terms of assembly, homodimer. Mg(2+) serves as cofactor.

The protein resides in the cytoplasm. It catalyses the reaction Endonucleolytic cleavage to 5'-phosphomonoester.. In terms of biological role, digests double-stranded RNA. Involved in the processing of primary rRNA transcript to yield the immediate precursors to the large and small rRNAs (23S and 16S). Processes some mRNAs, and tRNAs when they are encoded in the rRNA operon. Processes pre-crRNA and tracrRNA of type II CRISPR loci if present in the organism. The protein is Ribonuclease 3 of Aliarcobacter butzleri (strain RM4018) (Arcobacter butzleri).